The chain runs to 305 residues: 4-diphosphocytidyl-2-C-methyl-D-erythritol kinase (305 aa).

The active site involves lysine 17. 111–121 contacts ATP; sequence PVASGIGGGSA. Residue aspartate 154 is part of the active site.

Belongs to the GHMP kinase family. IspE subfamily.

The catalysed reaction is 4-CDP-2-C-methyl-D-erythritol + ATP = 4-CDP-2-C-methyl-D-erythritol 2-phosphate + ADP + H(+). The protein operates within isoprenoid biosynthesis; isopentenyl diphosphate biosynthesis via DXP pathway; isopentenyl diphosphate from 1-deoxy-D-xylulose 5-phosphate: step 3/6. In terms of biological role, catalyzes the phosphorylation of the position 2 hydroxy group of 4-diphosphocytidyl-2C-methyl-D-erythritol. The sequence is that of 4-diphosphocytidyl-2-C-methyl-D-erythritol kinase from Gluconacetobacter diazotrophicus (strain ATCC 49037 / DSM 5601 / CCUG 37298 / CIP 103539 / LMG 7603 / PAl5).